A 283-amino-acid polypeptide reads, in one-letter code: Succinate dehydrogenase [ubiquinone] iron-sulfur subunit, mitochondrial (283 aa).

Residues 66–145 (KKPTLQTYSI…PVKIYPLPHM (80 aa)) form the 2Fe-2S ferredoxin-type domain. Positions 105, 110, 113, and 125 each coordinate [2Fe-2S] cluster. One can recognise a 4Fe-4S ferredoxin-type domain in the interval 186 to 216 (DRKKLDGMYECILCACCSTSCPSYWWNQDEY). 3 residues coordinate [4Fe-4S] cluster: cysteine 196, cysteine 199, and cysteine 202. Cysteine 206 contributes to the [3Fe-4S] cluster binding site. Tryptophan 211 is a binding site for a ubiquinone. 2 residues coordinate [3Fe-4S] cluster: cysteine 253 and cysteine 259. Cysteine 263 is a binding site for [4Fe-4S] cluster.

It belongs to the succinate dehydrogenase/fumarate reductase iron-sulfur protein family. In terms of assembly, component of complex II composed of four subunits: a flavoprotein (FP), an iron-sulfur protein (IP), and a cytochrome b composed of a large and a small subunit. Requires [2Fe-2S] cluster as cofactor. [3Fe-4S] cluster is required as a cofactor. The cofactor is [4Fe-4S] cluster.

The protein localises to the mitochondrion inner membrane. It catalyses the reaction a quinone + succinate = fumarate + a quinol. Its pathway is carbohydrate metabolism; tricarboxylic acid cycle; fumarate from succinate (eukaryal route): step 1/1. Its function is as follows. Iron-sulfur protein (IP) subunit of succinate dehydrogenase (SDH) that is involved in complex II of the mitochondrial electron transport chain and is responsible for transferring electrons from succinate to ubiquinone (coenzyme Q). The protein is Succinate dehydrogenase [ubiquinone] iron-sulfur subunit, mitochondrial (SDH2) of Uromyces fabae (Rust fungus).